We begin with the raw amino-acid sequence, 61 residues long: Conotoxin Bt5.1 (61 aa).

A signal peptide spans 1–22; the sequence is MRGLPVFVILLLLIASEPSVDA. A propeptide spanning residues 23-48 is cleaved from the precursor; it reads RPKTKADVPLTSLNDNAKRTLQILRN.

This sequence belongs to the conotoxin T superfamily. In terms of processing, contains 2 disulfide bonds that can be either 'C1-C3, C2-C4' or 'C1-C4, C2-C3', since these disulfide connectivities have been observed for conotoxins with cysteine framework V (for examples, see AC P0DQQ7 and AC P81755). As to expression, expressed by the venom duct.

It localises to the secreted. This chain is Conotoxin Bt5.1, found in Conus betulinus (Beech cone).